A 1357-amino-acid polypeptide reads, in one-letter code: DNA-directed RNA polymerase subunit beta (1357 aa).

Belongs to the RNA polymerase beta chain family. The RNAP catalytic core consists of 2 alpha, 1 beta, 1 beta' and 1 omega subunit. When a sigma factor is associated with the core the holoenzyme is formed, which can initiate transcription.

It carries out the reaction RNA(n) + a ribonucleoside 5'-triphosphate = RNA(n+1) + diphosphate. In terms of biological role, DNA-dependent RNA polymerase catalyzes the transcription of DNA into RNA using the four ribonucleoside triphosphates as substrates. In Ectopseudomonas mendocina (strain ymp) (Pseudomonas mendocina), this protein is DNA-directed RNA polymerase subunit beta.